A 209-amino-acid chain; its full sequence is Redox-sensing transcriptional repressor Rex (209 aa).

A DNA-binding region (H-T-H motif) is located at residues 16–55 (LYYRFIQNLSLSGKQRVSSAELSEAVKVDSATIRRDFSYF). 90–95 (GVGNLG) lines the NAD(+) pocket.

Belongs to the transcriptional regulatory Rex family. In terms of assembly, homodimer.

It is found in the cytoplasm. Its function is as follows. Modulates transcription in response to changes in cellular NADH/NAD(+) redox state. This Bacillus cereus (strain ATCC 10987 / NRS 248) protein is Redox-sensing transcriptional repressor Rex.